Here is a 565-residue protein sequence, read N- to C-terminus: NAD-dependent malic enzyme (565 aa).

Tyr104 acts as the Proton donor in catalysis. Arg157 lines the NAD(+) pocket. Lys175 acts as the Proton acceptor in catalysis. A divalent metal cation-binding residues include Glu246, Asp247, and Asp270. Residues Asp270 and Asn418 each contribute to the NAD(+) site.

This sequence belongs to the malic enzymes family. As to quaternary structure, homotetramer. Mg(2+) is required as a cofactor. The cofactor is Mn(2+).

The enzyme catalyses (S)-malate + NAD(+) = pyruvate + CO2 + NADH. It catalyses the reaction oxaloacetate + H(+) = pyruvate + CO2. In Escherichia coli O6:H1 (strain CFT073 / ATCC 700928 / UPEC), this protein is NAD-dependent malic enzyme.